A 357-amino-acid polypeptide reads, in one-letter code: Chorismate synthase (357 aa).

Basic and acidic residues predominate over residues 38–49; the sequence is EKDIQPDLDRRK. Positions 38–60 are disordered; sequence EKDIQPDLDRRKPGTSRYTTPRR. The NADP(+) site is built by Arg48 and Arg54. FMN-binding positions include 125 to 127, 243 to 244, Gly283, 298 to 302, and Arg324; these read RSS, NA, and KPTSS.

Belongs to the chorismate synthase family. As to quaternary structure, homotetramer. FMNH2 is required as a cofactor.

The enzyme catalyses 5-O-(1-carboxyvinyl)-3-phosphoshikimate = chorismate + phosphate. It participates in metabolic intermediate biosynthesis; chorismate biosynthesis; chorismate from D-erythrose 4-phosphate and phosphoenolpyruvate: step 7/7. In terms of biological role, catalyzes the anti-1,4-elimination of the C-3 phosphate and the C-6 proR hydrogen from 5-enolpyruvylshikimate-3-phosphate (EPSP) to yield chorismate, which is the branch point compound that serves as the starting substrate for the three terminal pathways of aromatic amino acid biosynthesis. This reaction introduces a second double bond into the aromatic ring system. The sequence is that of Chorismate synthase from Haemophilus influenzae (strain PittEE).